Here is a 224-residue protein sequence, read N- to C-terminus: ATP-dependent dethiobiotin synthetase BioD (224 aa).

13 to 18 (NVGKTI) provides a ligand contact to ATP. Thr-17 contacts Mg(2+). Lys-38 is an active-site residue. Ser-42 serves as a coordination point for substrate. ATP-binding positions include Asp-55, 116–119 (EGAG), 176–177 (NN), and Asn-211. Mg(2+) contacts are provided by Asp-55 and Glu-116.

It belongs to the dethiobiotin synthetase family. Homodimer. Mg(2+) serves as cofactor.

It localises to the cytoplasm. It catalyses the reaction (7R,8S)-7,8-diammoniononanoate + CO2 + ATP = (4R,5S)-dethiobiotin + ADP + phosphate + 3 H(+). Its pathway is cofactor biosynthesis; biotin biosynthesis; biotin from 7,8-diaminononanoate: step 1/2. In terms of biological role, catalyzes a mechanistically unusual reaction, the ATP-dependent insertion of CO2 between the N7 and N8 nitrogen atoms of 7,8-diaminopelargonic acid (DAPA, also called 7,8-diammoniononanoate) to form a ureido ring. This Buchnera aphidicola subsp. Acyrthosiphon pisum (strain 5A) protein is ATP-dependent dethiobiotin synthetase BioD.